A 316-amino-acid polypeptide reads, in one-letter code: Putative metal-binding protein TP_0034 (316 aa).

A signal peptide spans 1–19 (MQRCSVVAALAGVVFLAQA). Residues His68, His146, and His210 each contribute to the a divalent metal cation site.

The protein belongs to the bacterial solute-binding protein 9 family.

The protein resides in the periplasm. In terms of biological role, part of an ATP-binding cassette (ABC) transport system involved in metal import. Binds a metal with high affinity and specificity and delivers it to the membrane permease for translocation into the cytoplasm. The chain is Putative metal-binding protein TP_0034 from Treponema pallidum (strain Nichols).